A 521-amino-acid chain; its full sequence is MKFKLYWWEVFRWFSDTPSRSSERACEASRQVQHIKKDYVSYKCLVPSLPKHSWQAIILYMNTRLNNFVFIIYWSVLECKTSIYLLNILNKLGLIVSVPGKSFSSPKLLINIRSFFNGNKRLRIMSQSNPYNIWLYPLNILLSFPVHRKPKKLRSTEKIFEKNGFNCENREYPHDKNDKTYFVSGKSSEEELVRIERMNQKLAWIEATLNDLDNWKRYYSLSSFSFEMGDIPEEGQSSLSVEGESDSIVTTIAYESIGLVPRSITRTLSRFKTELTGQSSSLVLYEFRLAKYQALASLQYLGCLILIPWGISFPSERWLLKPWIKNWWNINQFQIFLNYFQEERASKRLQEVEELLWLDEVMLADSSSSEVQSQDLNRQIHDKTIQLVAMYNEDSIQTILHLLTDIIYFAIPSASFISGKKRLAVMNSWIQESFHSLSDTMKAFFILLLTDSCIGFHSPHGWEILISSLSKHLGFAHNKHIISCFVSTFPVISDTVFKYWIFRHLNRISPSIVATYHAMNE.

5 helical membrane passes run 68–88, 294–314, 399–419, 446–466, and 481–501; these read FVFI…LLNI, ALAS…ISFP, ILHL…FISG, ILLL…EILI, and IISC…KYWI.

This sequence belongs to the CemA family.

Its subcellular location is the plastid. It is found in the chloroplast inner membrane. The enzyme catalyses K(+)(in) + H(+)(out) = K(+)(out) + H(+)(in). In terms of biological role, contributes to K(+)/H(+) antiport activity by supporting proton efflux to control proton extrusion and homeostasis in chloroplasts in a light-dependent manner to modulate photosynthesis. Prevents excessive induction of non-photochemical quenching (NPQ) under continuous-light conditions. Indirectly promotes efficient inorganic carbon uptake into chloroplasts. In Huperzia lucidula (Shining clubmoss), this protein is Potassium/proton antiporter CemA.